Consider the following 581-residue polypeptide: Tricyclene synthase Oc15, chloroplastic (581 aa).

The transit peptide at 1 to 68 (MAFCISYVGA…ALCLNEHSLS (68 aa)) directs the protein to the chloroplast. N-linked (GlcNAc...) asparagine glycosylation is found at Asn-27, Asn-206, and Asn-319. Mg(2+) contacts are provided by Asp-338 and Asp-342. Positions 338–342 (DDIFD) match the DDXXD motif motif. N-linked (GlcNAc...) asparagine glycans are attached at residues Asn-384 and Asn-465. The Mg(2+) site is built by Asn-482, Ser-486, and Glu-490. An N-linked (GlcNAc...) asparagine glycan is attached at Asn-509.

It belongs to the terpene synthase family. Tpsg subfamily. Mg(2+) is required as a cofactor. The cofactor is Mn(2+). As to expression, accumulates in flowers; mostly expressed in both upper and lower petal lobes, and, to a lower extent, in tube and stamens.

It is found in the plastid. The protein resides in the chloroplast stroma. The enzyme catalyses (2E)-geranyl diphosphate = tricyclene + diphosphate. It catalyses the reaction (2E)-geranyl diphosphate = beta-myrcene + diphosphate. Its pathway is secondary metabolite biosynthesis; terpenoid biosynthesis. Contributes to floral scent emission. This Antirrhinum majus (Garden snapdragon) protein is Tricyclene synthase Oc15, chloroplastic (Oc15).